Here is a 258-residue protein sequence, read N- to C-terminus: Large ribosomal subunit protein uL3 (258 aa).

This sequence belongs to the universal ribosomal protein uL3 family. Part of the 50S ribosomal subunit. Forms a cluster with proteins L14 and L19.

Its function is as follows. One of the primary rRNA binding proteins, it binds directly near the 3'-end of the 23S rRNA, where it nucleates assembly of the 50S subunit. This is Large ribosomal subunit protein uL3 from Spiroplasma kunkelii.